The primary structure comprises 540 residues: Arylsulfatase K (540 aa).

The signal sequence occupies residues 1–22 (MLLLWVSVVAASALAAPAPGAD). Residues Asp44 and Cys84 each contribute to the Ca(2+) site. The active-site Nucleophile is the Cys84. At Cys84 the chain carries 3-oxoalanine (Cys). The N-linked (GlcNAc...) asparagine glycan is linked to Asn112. A substrate-binding site is contributed by Lys132. An N-linked (GlcNAc...) asparagine glycan is attached at Asn197. His255 is a binding site for substrate. Asn266 is a glycosylation site (N-linked (GlcNAc...) asparagine). Ca(2+) contacts are provided by Asp317 and His318. Asn379, Asn417, and Asn502 each carry an N-linked (GlcNAc...) asparagine glycan.

The protein belongs to the sulfatase family. The cofactor is Ca(2+). In terms of processing, the conversion to 3-oxoalanine (also known as C-formylglycine, FGly), of a serine or cysteine residue in prokaryotes and of a cysteine residue in eukaryotes, is critical for catalytic activity. Post-translationally, the 75-kDa precursor undergoes proteolytic processing to yield a 23 kDa form. N-glycosylated with both high mannose and complex type sugars.

It is found in the secreted. The protein localises to the lysosome. The enzyme catalyses an aryl sulfate + H2O = a phenol + sulfate + H(+). It catalyses the reaction Hydrolysis of the 2-sulfate groups of the 2-O-sulfo-D-glucuronate residues of chondroitin sulfate, heparin and heparitin sulfate.. Functionally, catalyzes the hydrolysis of pseudosubstrates such as p-nitrocatechol sulfate and p-nitrophenyl sulfate. Catalyzes the hydrolysis of the 2-sulfate groups of the 2-O-sulfo-D-glucuronate residues of chondroitin sulfate, heparin and heparitin sulfate. Acts selectively on 2-sulfoglucuronate and lacks activity against 2-sulfoiduronate. In Bos taurus (Bovine), this protein is Arylsulfatase K (ARSK).